The chain runs to 299 residues: Circadian clock oscillator protein KaiA (299 aa).

A psR domain, binds oxidized quinones region spans residues 1-135; it reads MQSPLSLCLF…LHLGPICTLP (135 aa). A KaiA N-terminal domain is found at 1 to 169; that stretch reads MQSPLSLCLF…RLADKLKERL (169 aa). The segment at 170 to 178 is flexible linker; the sequence is GYLGVYYKR. A KaiA C-terminal domain is found at 179-287; that stretch reads KPSHFYRNFS…GEMYRRSIPR (109 aa).

This sequence belongs to the KaiA family. As to quaternary structure, homodimer. The KaiABC1 complex composition changes during the circadian cycle to control KaiC1 phosphorylation. Complexes KaiC1(6), KaiA(2-4):KaiC1(6), KaiB(6):KaiC1(6) and KaiC1(6):KaiB(6):KaiA(12) are among the most important forms, many form cooperatively. KaiA and CikA bind to the same region of the KaiB(fs) form and therefore compete. Interacts with KaiC1 but not KaiC2 or KaiC3. Interacts with itself, not seen to interact with other Kai proteins.

Functionally, key component of the KaiABC oscillator complex, which constitutes the main circadian regulator in cyanobacteria. Complex composition changes during the circadian cycle to control KaiC phosphorylation. KaiA stimulates KaiC autophosphorylation, while KaiB sequesters KaiA, leading to KaiC autodephosphorylation. KaiA binding to the KaiC CII domain during the subjective day yields KaiA(2-4):KaiC(6) complexes which stimulate KaiC autophosphorylation. Phospho-Ser-431 KaiC accumulation triggers binding of KaiB during the subjective night to form the KaiB(6):KaiC(6) complex, leading to changes in the output regulators CikA and SasA. KaiB(6):KaiC(6) formation exposes a site for KaiA binding on KaiB that sequesters KaiA from KaiC's CII domain, making the KaiC(6):KaiB(6):KaiA(12) complex resulting in KaiC autodephosphorylation. Complete dephosphorylation of KaiC leads to dissociation of KaiA(2):KaiB(1), completing 1 cycle of the Kai oscillator. In terms of biological role, component of the oscillator and circadian clock in this organism, enhances fitness in a rhythmic environment. Stimulates KaiC1 to autophosphorylate, has no effect on the kinase activity of KaiC2 or KaiC3. Binds oxidized quinones via the N-terminal PsR domain, allowing it to sense redox changes and possibly mediate clock input. The sequence is that of Circadian clock oscillator protein KaiA from Synechocystis sp. (strain ATCC 27184 / PCC 6803 / Kazusa).